The sequence spans 264 residues: Tryptophan synthase alpha chain (264 aa).

Catalysis depends on proton acceptor residues Glu44 and Asp55.

The protein belongs to the TrpA family. Tetramer of two alpha and two beta chains.

It catalyses the reaction (1S,2R)-1-C-(indol-3-yl)glycerol 3-phosphate + L-serine = D-glyceraldehyde 3-phosphate + L-tryptophan + H2O. It participates in amino-acid biosynthesis; L-tryptophan biosynthesis; L-tryptophan from chorismate: step 5/5. Functionally, the alpha subunit is responsible for the aldol cleavage of indoleglycerol phosphate to indole and glyceraldehyde 3-phosphate. The sequence is that of Tryptophan synthase alpha chain from Lactiplantibacillus plantarum (strain ATCC BAA-793 / NCIMB 8826 / WCFS1) (Lactobacillus plantarum).